Reading from the N-terminus, the 287-residue chain is Pantothenate synthetase (287 aa).

30–37 is an ATP binding site; the sequence is MGNLHSGH. Residue histidine 37 is the Proton donor of the active site. (R)-pantoate is bound at residue glutamine 61. Glutamine 61 is a binding site for beta-alanine. 149-152 lines the ATP pocket; it reads GEKD. A (R)-pantoate-binding site is contributed by glutamine 155. Residues valine 178 and 186–189 each bind ATP; that span reads LSSR.

This sequence belongs to the pantothenate synthetase family. In terms of assembly, homodimer.

It localises to the cytoplasm. The catalysed reaction is (R)-pantoate + beta-alanine + ATP = (R)-pantothenate + AMP + diphosphate + H(+). Its pathway is cofactor biosynthesis; (R)-pantothenate biosynthesis; (R)-pantothenate from (R)-pantoate and beta-alanine: step 1/1. Functionally, catalyzes the condensation of pantoate with beta-alanine in an ATP-dependent reaction via a pantoyl-adenylate intermediate. The polypeptide is Pantothenate synthetase (Pseudomonas putida (strain W619)).